Consider the following 248-residue polypeptide: Allergin-1 (248 aa).

The N-terminal stretch at 1–33 (MGDDDTPVCLSVASCKGVSCWLDKLLLWALTLS) is a signal peptide. Residues 34–150 (ITLRNTAVDC…DESCSSCLLS (117 aa)) are Extracellular-facing. The 84-residue stretch at 54–137 (PNLNSSMSVV…SKYSQNFNFT (84 aa)) folds into the Ig-like C2-type domain. N68 is a glycosylation site (N-linked (GlcNAc...) asparagine). A disulfide bond links C73 and C120. N135 is a glycosylation site (N-linked (GlcNAc...) asparagine). Residues 151 to 171 (LLLPGVLLGLILPGLAFLIYL) form a helical membrane-spanning segment. Topologically, residues 172-248 (KYKKGCTGKT…DDYIYSELTY (77 aa)) are cytoplasmic. 2 short sequence motifs (ITIM motif) span residues 216–221 (IHYTTP) and 241–246 (YIYSEL). Phosphotyrosine is present on residues Y218 and Y243.

As to quaternary structure, monomer. Interacts (tyrosine-phosphorylated) with PTPN6, PTPN11 and INPP5D. Post-translationally, N-glycosylated. As to expression, mast cell-specific. Expressed in primary and transformed mast cells.

Its subcellular location is the cell membrane. Functionally, immunoglobulin-like receptor which plays an inhibitory role in degranulation of mast cells. Negatively regulates IgE-mediated mast cell activation and suppresses the type I immediate hypersensitivity reaction. The polypeptide is Allergin-1 (Milr1) (Rattus norvegicus (Rat)).